The following is a 1017-amino-acid chain: GPI ethanolamine phosphate transferase 3 (1017 aa).

The chain crosses the membrane as a helical span at residues 34–54 (FYIILLVFIAILQFISIAFFT). N66, N71, N100, N182, and N203 each carry an N-linked (GlcNAc...) asparagine glycan. A helical transmembrane segment spans residues 347 to 367 (VSSLALLMGQPIPFNNLGWPI). N-linked (GlcNAc...) asparagine glycosylation occurs at N411. Helical transmembrane passes span 457 to 477 (LLATSLVLLISITKLIPSIVV), 484 to 504 (FVPGIIIMVLVTNLCFHGIFY), 515 to 535 (FWGTLLATAIGIIIGCYITIF), 558 to 578 (IAVMFMIIHALLFTSNSFTIW), 582 to 602 (IVAFLLSTFGMLTLYEFVFLP), and 644 to 664 (LGGYHSAVLIIFTRLASMITI). N-linked (GlcNAc...) asparagine glycans are attached at residues N681 and N682. A helical membrane pass occupies residues 685-705 (WWVLGLCFLMIFILPACITGY). An N-linked (GlcNAc...) asparagine glycan is attached at N707. Residues 715–735 (AAPIWINVFLKGILGLNFVYW) form a helical membrane-spanning segment. N-linked (GlcNAc...) asparagine glycosylation is present at N742. 6 helical membrane-spanning segments follow: residues 765–785 (IIAGFSLIASNVGWLMGPLCI), 806–826 (NIYGSEFFLLVINVLISILLF), 829–849 (PLAQLSYFLMCNQLLSILEII), 903–923 (IAIILNTFGPHILVSLSVALL), 947–967 (GILLTYNTILCLSSFIWVTHF), and 981–1001 (FIFASLSLIVTQLVVTFGTIA).

It belongs to the PIGG/PIGN/PIGO family. PIGO subfamily. Post-translationally, glycosylated.

The protein resides in the endoplasmic reticulum membrane. It functions in the pathway glycolipid biosynthesis; glycosylphosphatidylinositol-anchor biosynthesis. Functionally, involved in glycosylphosphatidylinositol-anchor biosynthesis. Transfers ethanolamine phosphate to the GPI third mannose which links the GPI-anchor to the C-terminus of the proteins by an amide bond. Involved in cell wall biosynthesis. The sequence is that of GPI ethanolamine phosphate transferase 3 (GPI13) from Saccharomyces cerevisiae (strain ATCC 204508 / S288c) (Baker's yeast).